The following is a 307-amino-acid chain: Cyclooctat-9-en-7-ol synthase (307 aa).

The Mg(2+) site is built by aspartate 110, asparagine 220, serine 224, and glutamate 228. Positions 110-113 match the DDXXD motif; degenerate motif; the sequence is DDMD. Residues 220 to 228 carry the NSE/DTE motif motif; sequence NDFYSYDRE.

It belongs to the terpene synthase family. In terms of assembly, homodimer. The cofactor is Mg(2+).

It catalyses the reaction geranylgeranyl diphosphate + H2O = cyclooctat-9-en-7-ol + diphosphate. Catalyzes the cyclization of the linear isoprenoid intermediate geranylgeranyl diphosphate to tricycclic cyclooctat-9-en-7-ol in the cyclooctatin biosynthesis pathway. Cyclooctatin is a potent inhibitor of lysophospholipase. This Streptomyces melanosporofaciens protein is Cyclooctat-9-en-7-ol synthase.